The following is a 218-amino-acid chain: UPF0502 protein Geob_1184 (218 aa).

This sequence belongs to the UPF0502 family.

This is UPF0502 protein Geob_1184 from Geotalea daltonii (strain DSM 22248 / JCM 15807 / FRC-32) (Geobacter daltonii).